Here is a 185-residue protein sequence, read N- to C-terminus: MPQVNLKLSSHDRQVLESIFNPLELSSTQPSVSVPCESELADVEPDTEAVRSSRELELQGVLLTEKGSFDEALKVFQLALNQAQRASVLNNRAQTLRLAKRDGEALDDLNKALEMASDQQSRTKCHAHCQRGVLYRKLDNLDAARSDFEAAAQLGSKFAREQLVEINPFAALCNQMLRKAFDQLQ.

TPR repeat units lie at residues 53–86 (SREL…AQRA), 88–119 (VLNN…ASDQ), and 125–158 (CHAH…GSKF).

Belongs to the TTC36 family.

The protein is Tetratricopeptide repeat protein 36 homolog of Drosophila pseudoobscura pseudoobscura (Fruit fly).